Reading from the N-terminus, the 179-residue chain is Large ribosomal subunit protein uL6 (179 aa).

Belongs to the universal ribosomal protein uL6 family. In terms of assembly, part of the 50S ribosomal subunit.

Functionally, this protein binds to the 23S rRNA, and is important in its secondary structure. It is located near the subunit interface in the base of the L7/L12 stalk, and near the tRNA binding site of the peptidyltransferase center. This chain is Large ribosomal subunit protein uL6, found in Mycobacteroides abscessus (strain ATCC 19977 / DSM 44196 / CCUG 20993 / CIP 104536 / JCM 13569 / NCTC 13031 / TMC 1543 / L948) (Mycobacterium abscessus).